A 37-amino-acid polypeptide reads, in one-letter code: Large ribosomal subunit protein bL36 (37 aa).

It belongs to the bacterial ribosomal protein bL36 family.

This chain is Large ribosomal subunit protein bL36, found in Gloeothece citriformis (strain PCC 7424) (Cyanothece sp. (strain PCC 7424)).